Here is a 208-residue protein sequence, read N- to C-terminus: Outer-membrane lipoprotein carrier protein (208 aa).

The signal sequence occupies residues 1-24 (MRMNIVQKILSATCFALLPLLAHA).

The protein belongs to the LolA family. Monomer.

It localises to the periplasm. In terms of biological role, participates in the translocation of lipoproteins from the inner membrane to the outer membrane. Only forms a complex with a lipoprotein if the residue after the N-terminal Cys is not an aspartate (The Asp acts as a targeting signal to indicate that the lipoprotein should stay in the inner membrane). In Dechloromonas aromatica (strain RCB), this protein is Outer-membrane lipoprotein carrier protein.